A 535-amino-acid chain; its full sequence is Peptide chain release factor 3 (535 aa).

A tr-type G domain is found at alanine 8 to glycine 276. GTP is bound by residues serine 17–threonine 24, aspartate 85–histidine 89, and asparagine 139–aspartate 142.

This sequence belongs to the TRAFAC class translation factor GTPase superfamily. Classic translation factor GTPase family. PrfC subfamily.

It localises to the cytoplasm. In terms of biological role, increases the formation of ribosomal termination complexes and stimulates activities of RF-1 and RF-2. It binds guanine nucleotides and has strong preference for UGA stop codons. It may interact directly with the ribosome. The stimulation of RF-1 and RF-2 is significantly reduced by GTP and GDP, but not by GMP. The chain is Peptide chain release factor 3 from Bordetella avium (strain 197N).